Reading from the N-terminus, the 147-residue chain is ATP synthase epsilon chain 2 (147 aa).

This sequence belongs to the ATPase epsilon chain family. F-type ATPases have 2 components, CF(1) - the catalytic core - and CF(0) - the membrane proton channel. CF(1) has five subunits: alpha(3), beta(3), gamma(1), delta(1), epsilon(1). CF(0) has three main subunits: a, b and c.

It localises to the cell inner membrane. Produces ATP from ADP in the presence of a proton gradient across the membrane. This chain is ATP synthase epsilon chain 2, found in Photobacterium profundum (strain SS9).